Here is a 94-residue protein sequence, read N- to C-terminus: Acylphosphatase (94 aa).

One can recognise an Acylphosphatase-like domain in the interval 8-94 (RLTAWVHGRV…REQITGFHER (87 aa)). Active-site residues include Arg23 and Asn41.

This sequence belongs to the acylphosphatase family.

It carries out the reaction an acyl phosphate + H2O = a carboxylate + phosphate + H(+). The sequence is that of Acylphosphatase (acyP) from Mycobacterium sp. (strain JLS).